The chain runs to 191 residues: MIRGVRGTLVAKRSGEVLVDVQGVTFRVQTSATTLQELGEPGDLVSLVTHLIVREDELALYGFATEAELELFLSLLAVSGVGPRGALNLLSLAAPDRLTEWIRGERIEELARAPGIGKKTASRIVLELRGRLPALTEVQAGEPIDQELVAALQALGYTAQEARQAATHPEVRRAPSLEERIVAALRQLAPP.

Residues 1-64 (MIRGVRGTLV…EDELALYGFA (64 aa)) form a domain I region. A domain II region spans residues 65 to 136 (TEAELELFLS…ELRGRLPALT (72 aa)). Positions 136-139 (TEVQ) are flexible linker. Residues 140–191 (AGEPIDQELVAALQALGYTAQEARQAATHPEVRRAPSLEERIVAALRQLAPP) form a domain III region.

The protein belongs to the RuvA family. In terms of assembly, homotetramer. Forms an RuvA(8)-RuvB(12)-Holliday junction (HJ) complex. HJ DNA is sandwiched between 2 RuvA tetramers; dsDNA enters through RuvA and exits via RuvB. An RuvB hexamer assembles on each DNA strand where it exits the tetramer. Each RuvB hexamer is contacted by two RuvA subunits (via domain III) on 2 adjacent RuvB subunits; this complex drives branch migration. In the full resolvosome a probable DNA-RuvA(4)-RuvB(12)-RuvC(2) complex forms which resolves the HJ.

It localises to the cytoplasm. In terms of biological role, the RuvA-RuvB-RuvC complex processes Holliday junction (HJ) DNA during genetic recombination and DNA repair, while the RuvA-RuvB complex plays an important role in the rescue of blocked DNA replication forks via replication fork reversal (RFR). RuvA specifically binds to HJ cruciform DNA, conferring on it an open structure. The RuvB hexamer acts as an ATP-dependent pump, pulling dsDNA into and through the RuvAB complex. HJ branch migration allows RuvC to scan DNA until it finds its consensus sequence, where it cleaves and resolves the cruciform DNA. The polypeptide is Holliday junction branch migration complex subunit RuvA (Thermomicrobium roseum (strain ATCC 27502 / DSM 5159 / P-2)).